Here is a 143-residue protein sequence, read N- to C-terminus: Large ribosomal subunit protein uL11 (143 aa).

It belongs to the universal ribosomal protein uL11 family. In terms of assembly, part of the ribosomal stalk of the 50S ribosomal subunit. Interacts with L10 and the large rRNA to form the base of the stalk. L10 forms an elongated spine to which L12 dimers bind in a sequential fashion forming a multimeric L10(L12)X complex. In terms of processing, one or more lysine residues are methylated.

Functionally, forms part of the ribosomal stalk which helps the ribosome interact with GTP-bound translation factors. The protein is Large ribosomal subunit protein uL11 of Herminiimonas arsenicoxydans.